The chain runs to 313 residues: Cytosolic Fe-S cluster assembly factor NUBP1 homolog (313 aa).

Residues 1–25 (MSDVPDDANAGCPGTGSAGAGKASG) are disordered. [4Fe-4S] cluster-binding residues include Cys-12, Cys-26, Cys-29, and Cys-35. 66-73 (GKGGVGKS) provides a ligand contact to ATP. Cys-240 and Cys-243 together coordinate [4Fe-4S] cluster.

The protein belongs to the Mrp/NBP35 ATP-binding proteins family. NUBP1/NBP35 subfamily. Heterotetramer of 2 NUBP1 and 2 NUBP2 chains. It depends on [4Fe-4S] cluster as a cofactor. Expressed in head amphid and labial ciliated sensory neurons and tail phasmid ciliated chemosensory neurons.

It is found in the cytoplasm. It localises to the cell projection. Functionally, component of the cytosolic iron-sulfur (Fe/S) protein assembly (CIA) machinery. Required for maturation of extramitochondrial Fe-S proteins. The NUBP1-NUBP2 heterotetramer forms a Fe-S scaffold complex, mediating the de novo assembly of an Fe-S cluster and its transfer to target apoproteins. Regulates cilium formation and structure. The polypeptide is Cytosolic Fe-S cluster assembly factor NUBP1 homolog (Caenorhabditis elegans).